The chain runs to 517 residues: Protein BTN1 (517 aa).

A run of 8 helical transmembrane segments spans residues 24-44 (LFAA…IILS), 57-77 (GVVA…WPLL), 88-108 (VGFC…SSSL), 112-132 (LLGI…FLQL), 146-166 (LGAW…IWWL), 169-189 (GLGV…FPIT), 371-391 (PAII…TFFF), and 409-429 (SITI…SGYV).

The protein belongs to the battenin family.

Its subcellular location is the vacuole membrane. Involved in vacuolar transport and vacuole pH homeostasis. Also required for cytokinesis. In Cryptococcus neoformans var. neoformans serotype D (strain B-3501A) (Filobasidiella neoformans), this protein is Protein BTN1 (BTN1).